Here is a 337-residue protein sequence, read N- to C-terminus: Ketol-acid reductoisomerase (NADP(+)) (337 aa).

Residues 2-182 (AKIFYDNDAD…GATRAGVLLT (181 aa)) form the KARI N-terminal Rossmann domain. NADP(+) contacts are provided by residues 25 to 28 (YGSQ), S51, S53, and 83 to 86 (DTSQ). H108 is a catalytic residue. Residue G134 participates in NADP(+) binding. Residues 183-328 (TFAEETETDL…ANLRKMMPFI (146 aa)) enclose the KARI C-terminal knotted domain. Mg(2+) contacts are provided by D191, E195, E227, and E231. S252 contacts substrate.

This sequence belongs to the ketol-acid reductoisomerase family. Mg(2+) serves as cofactor.

The catalysed reaction is (2R)-2,3-dihydroxy-3-methylbutanoate + NADP(+) = (2S)-2-acetolactate + NADPH + H(+). The enzyme catalyses (2R,3R)-2,3-dihydroxy-3-methylpentanoate + NADP(+) = (S)-2-ethyl-2-hydroxy-3-oxobutanoate + NADPH + H(+). It functions in the pathway amino-acid biosynthesis; L-isoleucine biosynthesis; L-isoleucine from 2-oxobutanoate: step 2/4. Its pathway is amino-acid biosynthesis; L-valine biosynthesis; L-valine from pyruvate: step 2/4. Involved in the biosynthesis of branched-chain amino acids (BCAA). Catalyzes an alkyl-migration followed by a ketol-acid reduction of (S)-2-acetolactate (S2AL) to yield (R)-2,3-dihydroxy-isovalerate. In the isomerase reaction, S2AL is rearranged via a Mg-dependent methyl migration to produce 3-hydroxy-3-methyl-2-ketobutyrate (HMKB). In the reductase reaction, this 2-ketoacid undergoes a metal-dependent reduction by NADPH to yield (R)-2,3-dihydroxy-isovalerate. The protein is Ketol-acid reductoisomerase (NADP(+)) of Sorangium cellulosum (strain So ce56) (Polyangium cellulosum (strain So ce56)).